The chain runs to 308 residues: Quinolinate synthase (308 aa).

Histidine 24 and serine 41 together coordinate iminosuccinate. Residue cysteine 86 participates in [4Fe-4S] cluster binding. Residues 112–114 and serine 129 contribute to the iminosuccinate site; that span reads YIN. Residue cysteine 172 coordinates [4Fe-4S] cluster. Residues 198-200 and threonine 215 each bind iminosuccinate; that span reads HPE. Residue cysteine 265 participates in [4Fe-4S] cluster binding.

This sequence belongs to the quinolinate synthase family. Type 2 subfamily. It depends on [4Fe-4S] cluster as a cofactor.

Its subcellular location is the cytoplasm. The enzyme catalyses iminosuccinate + dihydroxyacetone phosphate = quinolinate + phosphate + 2 H2O + H(+). Its pathway is cofactor biosynthesis; NAD(+) biosynthesis; quinolinate from iminoaspartate: step 1/1. Functionally, catalyzes the condensation of iminoaspartate with dihydroxyacetone phosphate to form quinolinate. This chain is Quinolinate synthase, found in Sulfurihydrogenibium sp. (strain YO3AOP1).